Reading from the N-terminus, the 353-residue chain is Photosystem II protein D1 (353 aa).

3 helical membrane passes run 29–46, 118–133, and 142–156; these read YVGW…TATI, HFLI…EWEL, and WICV…AATA. Residue His-118 participates in chlorophyll a binding. Tyr-126 is a binding site for pheophytin a. Asp-170 and Glu-189 together coordinate [CaMn4O5] cluster. A helical membrane pass occupies residues 197 to 218; the sequence is FHMLGVAGVFGGSLFSAMHGSL. His-198 serves as a coordination point for chlorophyll a. Residues His-215 and 264–265 each bind a quinone; that span reads SF. His-215 contacts Fe cation. His-272 is a binding site for Fe cation. Residues 274–288 traverse the membrane as a helical segment; it reads FLAAWPVVGIWFTSL. The [CaMn4O5] cluster site is built by His-332, Glu-333, Asp-342, and Ala-344. A propeptide spanning residues 345–353 is cleaved from the precursor; it reads AVKAPSIIG.

It belongs to the reaction center PufL/M/PsbA/D family. In terms of assembly, PSII is composed of 1 copy each of membrane proteins PsbA, PsbB, PsbC, PsbD, PsbE, PsbF, PsbH, PsbI, PsbJ, PsbK, PsbL, PsbM, PsbT, PsbX, PsbY, PsbZ, Psb30/Ycf12, peripheral proteins PsbO, CyanoQ (PsbQ), PsbU, PsbV and a large number of cofactors. It forms dimeric complexes. The D1/D2 heterodimer binds P680, chlorophylls that are the primary electron donor of PSII, and subsequent electron acceptors. It shares a non-heme iron and each subunit binds pheophytin, quinone, additional chlorophylls, carotenoids and lipids. D1 provides most of the ligands for the Mn4-Ca-O5 cluster of the oxygen-evolving complex (OEC). There is also a Cl(-1) ion associated with D1 and D2, which is required for oxygen evolution. The PSII complex binds additional chlorophylls, carotenoids and specific lipids. is required as a cofactor. Post-translationally, tyr-161 forms a radical intermediate that is referred to as redox-active TyrZ, YZ or Y-Z. In terms of processing, C-terminally processed by CtpA; processing is essential to allow assembly of the oxygen-evolving complex and thus photosynthetic growth.

The protein localises to the cellular thylakoid membrane. It catalyses the reaction 2 a plastoquinone + 4 hnu + 2 H2O = 2 a plastoquinol + O2. In terms of biological role, photosystem II (PSII) is a light-driven water:plastoquinone oxidoreductase that uses light energy to abstract electrons from H(2)O, generating O(2) and a proton gradient subsequently used for ATP formation. It consists of a core antenna complex that captures photons, and an electron transfer chain that converts photonic excitation into a charge separation. The D1/D2 (PsbA/PsbD) reaction center heterodimer binds P680, the primary electron donor of PSII as well as several subsequent electron acceptors. The protein is Photosystem II protein D1 of Prochlorothrix hollandica.